A 217-amino-acid polypeptide reads, in one-letter code: Zinc finger CCHC-type and RNA-binding motif-containing protein 1 (217 aa).

The region spanning 10–88 (STVYVSNLPF…RVIKASIAID (79 aa)) is the RRM domain. A CCHC-type zinc finger spans residues 105–122 (SKCYECGESGHLSYACPK). Residues 120-217 (CPKNMLGERE…YFSDEEELSD (98 aa)) form a disordered region. Acidic residues predominate over residues 145-163 (PEEEIEEVEVSEEEGEDPA). Phosphoserine is present on residues Ser155, Ser210, and Ser216.

In terms of assembly, component of the U11/U12 snRNPs that are part of the U12-type spliceosome. Interacts with ZRSR1.

The protein resides in the nucleus. It localises to the nucleoplasm. In Rattus norvegicus (Rat), this protein is Zinc finger CCHC-type and RNA-binding motif-containing protein 1 (Zcrb1).